A 764-amino-acid chain; its full sequence is Aconitate hydratase (764 aa).

Residue 75–77 (DSH) coordinates substrate. The [4Fe-4S] cluster site is built by cysteine 307, cysteine 372, and cysteine 375. Residues arginine 405, arginine 410, arginine 568, and 648–649 (SR) each bind substrate.

This sequence belongs to the aconitase/IPM isomerase family. Requires [4Fe-4S] cluster as cofactor.

It is found in the cytoplasm. The catalysed reaction is citrate = D-threo-isocitrate. It participates in carbohydrate metabolism; glyoxylate and dicarboxylate metabolism. Functionally, catalyzes the isomerization of citrate to isocitrate via cis-aconitate. The polypeptide is Aconitate hydratase (ACO) (Cucumis melo var. conomon (Oriental pickling melon)).